The chain runs to 270 residues: Urease accessory protein UreD (270 aa).

It belongs to the UreD family. As to quaternary structure, ureD, UreF and UreG form a complex that acts as a GTP-hydrolysis-dependent molecular chaperone, activating the urease apoprotein by helping to assemble the nickel containing metallocenter of UreC. The UreE protein probably delivers the nickel.

The protein localises to the cytoplasm. Its function is as follows. Required for maturation of urease via the functional incorporation of the urease nickel metallocenter. This Synechocystis sp. (strain ATCC 27184 / PCC 6803 / Kazusa) protein is Urease accessory protein UreD.